The sequence spans 273 residues: Undecaprenyl-diphosphatase (273 aa).

7 helical membrane-spanning segments follow: residues 4–24 (FLLL…FLPI), 43–63 (KGKV…CWEY), 83–103 (FVLN…LFIK), 109–129 (LFHP…ILWA), 184–204 (ATEF…FYDL), 218–238 (VFAI…RGLL), and 248–268 (VFAW…YSGM).

It belongs to the UppP family.

Its subcellular location is the cell inner membrane. The catalysed reaction is di-trans,octa-cis-undecaprenyl diphosphate + H2O = di-trans,octa-cis-undecaprenyl phosphate + phosphate + H(+). Functionally, catalyzes the dephosphorylation of undecaprenyl diphosphate (UPP). Confers resistance to bacitracin. In Nitrosospira multiformis (strain ATCC 25196 / NCIMB 11849 / C 71), this protein is Undecaprenyl-diphosphatase.